The sequence spans 640 residues: Chaperone protein HtpG (640 aa).

An a; substrate-binding region spans residues 1 to 343 (MQTAENIEHL…SSDLPLNVSR (343 aa)). The interval 344-564 (EILQESKDID…THDVSGNLGR (221 aa)) is b. The tract at residues 565–640 (LLKSAGQKVP…LLLQNILSGK (76 aa)) is c.

This sequence belongs to the heat shock protein 90 family. As to quaternary structure, homodimer.

It localises to the cytoplasm. Functionally, molecular chaperone. Has ATPase activity. The polypeptide is Chaperone protein HtpG (Nitrosomonas europaea (strain ATCC 19718 / CIP 103999 / KCTC 2705 / NBRC 14298)).